The primary structure comprises 728 residues: Fatty acid oxidation complex subunit alpha (728 aa).

The segment at 1–189 is enoyl-CoA hydratase/isomerase; it reads MLYQSETIQV…KNGLIDAVVP (189 aa). A substrate-binding site is contributed by Asp-296. The interval 311 to 728 is 3-hydroxyacyl-CoA dehydrogenase; the sequence is TIPEYAAVLG…TIAVSTGKTA (418 aa). NAD(+) contacts are provided by residues Met-324, Asp-343, 400–402, Lys-407, and Ser-429; that span reads VVE. The For 3-hydroxyacyl-CoA dehydrogenase activity role is filled by His-450. Residue Asn-453 participates in NAD(+) binding. Substrate contacts are provided by Asn-500 and Tyr-660.

This sequence in the N-terminal section; belongs to the enoyl-CoA hydratase/isomerase family. In the C-terminal section; belongs to the 3-hydroxyacyl-CoA dehydrogenase family. In terms of assembly, heterotetramer of two alpha chains (FadB) and two beta chains (FadA).

It carries out the reaction a (3S)-3-hydroxyacyl-CoA + NAD(+) = a 3-oxoacyl-CoA + NADH + H(+). The catalysed reaction is a (3S)-3-hydroxyacyl-CoA = a (2E)-enoyl-CoA + H2O. The enzyme catalyses a 4-saturated-(3S)-3-hydroxyacyl-CoA = a (3E)-enoyl-CoA + H2O. It catalyses the reaction (3S)-3-hydroxybutanoyl-CoA = (3R)-3-hydroxybutanoyl-CoA. It carries out the reaction a (3Z)-enoyl-CoA = a 4-saturated (2E)-enoyl-CoA. The catalysed reaction is a (3E)-enoyl-CoA = a 4-saturated (2E)-enoyl-CoA. Its pathway is lipid metabolism; fatty acid beta-oxidation. Its function is as follows. Involved in the aerobic and anaerobic degradation of long-chain fatty acids via beta-oxidation cycle. Catalyzes the formation of 3-oxoacyl-CoA from enoyl-CoA via L-3-hydroxyacyl-CoA. It can also use D-3-hydroxyacyl-CoA and cis-3-enoyl-CoA as substrate. The protein is Fatty acid oxidation complex subunit alpha of Photorhabdus laumondii subsp. laumondii (strain DSM 15139 / CIP 105565 / TT01) (Photorhabdus luminescens subsp. laumondii).